A 120-amino-acid chain; its full sequence is Large ribosomal subunit protein bL20 (120 aa).

Belongs to the bacterial ribosomal protein bL20 family.

Functionally, binds directly to 23S ribosomal RNA and is necessary for the in vitro assembly process of the 50S ribosomal subunit. It is not involved in the protein synthesizing functions of that subunit. The chain is Large ribosomal subunit protein bL20 from Ureaplasma urealyticum serovar 10 (strain ATCC 33699 / Western).